A 388-amino-acid chain; its full sequence is Formate-dependent phosphoribosylglycinamide formyltransferase (388 aa).

Residues 11 to 12 (EL) and glutamate 71 contribute to the N(1)-(5-phospho-beta-D-ribosyl)glycinamide site. Residues arginine 103, lysine 144, 149–154 (SSGKGQ), 184–187 (EEFI), and glutamate 192 each bind ATP. The ATP-grasp domain occupies 108–300 (DLAAKELGLK…EFELHLRAVL (193 aa)). Positions 257 and 270 each coordinate Mg(2+). N(1)-(5-phospho-beta-D-ribosyl)glycinamide is bound by residues aspartate 277, lysine 349, and 356–357 (RR).

This sequence belongs to the PurK/PurT family. As to quaternary structure, homodimer.

It catalyses the reaction N(1)-(5-phospho-beta-D-ribosyl)glycinamide + formate + ATP = N(2)-formyl-N(1)-(5-phospho-beta-D-ribosyl)glycinamide + ADP + phosphate + H(+). Its pathway is purine metabolism; IMP biosynthesis via de novo pathway; N(2)-formyl-N(1)-(5-phospho-D-ribosyl)glycinamide from N(1)-(5-phospho-D-ribosyl)glycinamide (formate route): step 1/1. Functionally, involved in the de novo purine biosynthesis. Catalyzes the transfer of formate to 5-phospho-ribosyl-glycinamide (GAR), producing 5-phospho-ribosyl-N-formylglycinamide (FGAR). Formate is provided by PurU via hydrolysis of 10-formyl-tetrahydrofolate. The polypeptide is Formate-dependent phosphoribosylglycinamide formyltransferase (Bacteroides fragilis (strain ATCC 25285 / DSM 2151 / CCUG 4856 / JCM 11019 / LMG 10263 / NCTC 9343 / Onslow / VPI 2553 / EN-2)).